Here is a 224-residue protein sequence, read N- to C-terminus: Phosphoribosylformylglycinamidine synthase subunit PurQ (224 aa).

The 221-residue stretch at 4 to 224 (RIGIITFPGT…YSVLDGVLAG (221 aa)) folds into the Glutamine amidotransferase type-1 domain. Catalysis depends on cysteine 87, which acts as the Nucleophile. Catalysis depends on residues histidine 195 and glutamate 197.

In terms of assembly, part of the FGAM synthase complex composed of 1 PurL, 1 PurQ and 2 PurS subunits.

It is found in the cytoplasm. The enzyme catalyses N(2)-formyl-N(1)-(5-phospho-beta-D-ribosyl)glycinamide + L-glutamine + ATP + H2O = 2-formamido-N(1)-(5-O-phospho-beta-D-ribosyl)acetamidine + L-glutamate + ADP + phosphate + H(+). It carries out the reaction L-glutamine + H2O = L-glutamate + NH4(+). It functions in the pathway purine metabolism; IMP biosynthesis via de novo pathway; 5-amino-1-(5-phospho-D-ribosyl)imidazole from N(2)-formyl-N(1)-(5-phospho-D-ribosyl)glycinamide: step 1/2. Functionally, part of the phosphoribosylformylglycinamidine synthase complex involved in the purines biosynthetic pathway. Catalyzes the ATP-dependent conversion of formylglycinamide ribonucleotide (FGAR) and glutamine to yield formylglycinamidine ribonucleotide (FGAM) and glutamate. The FGAM synthase complex is composed of three subunits. PurQ produces an ammonia molecule by converting glutamine to glutamate. PurL transfers the ammonia molecule to FGAR to form FGAM in an ATP-dependent manner. PurS interacts with PurQ and PurL and is thought to assist in the transfer of the ammonia molecule from PurQ to PurL. In Mycolicibacterium paratuberculosis (strain ATCC BAA-968 / K-10) (Mycobacterium paratuberculosis), this protein is Phosphoribosylformylglycinamidine synthase subunit PurQ.